The following is a 496-amino-acid chain: Glycerol kinase (496 aa).

Thr-12 contributes to the ADP binding site. ATP-binding residues include Thr-12, Thr-13, and Ser-14. Thr-12 is a binding site for sn-glycerol 3-phosphate. Arg-16 lines the ADP pocket. Residues Arg-82, Glu-83, and Tyr-134 each coordinate sn-glycerol 3-phosphate. Residues Arg-82, Glu-83, and Tyr-134 each contribute to the glycerol site. Phosphohistidine; by HPr is present on His-230. Residue Asp-244 coordinates sn-glycerol 3-phosphate. Residues Asp-244 and Gln-245 each coordinate glycerol. Thr-266 and Gly-309 together coordinate ADP. 4 residues coordinate ATP: Thr-266, Gly-309, Gln-313, and Gly-410. Positions 410 and 414 each coordinate ADP.

The protein belongs to the FGGY kinase family. The phosphoenolpyruvate-dependent sugar phosphotransferase system (PTS), including enzyme I, and histidine-containing protein (HPr) are required for the phosphorylation of, which leads to the activation of the enzyme.

It carries out the reaction glycerol + ATP = sn-glycerol 3-phosphate + ADP + H(+). It participates in polyol metabolism; glycerol degradation via glycerol kinase pathway; sn-glycerol 3-phosphate from glycerol: step 1/1. Inhibited by fructose 1,6-bisphosphate and p-chloromercuribenzoate (PCMB). Functionally, key enzyme in the regulation of glycerol uptake and metabolism. Catalyzes the phosphorylation of glycerol to yield sn-glycerol 3-phosphate. The chain is Glycerol kinase from Thermus thermophilus.